The chain runs to 98 residues: DNA-binding protein Fis (98 aa).

Positions 74 to 93 form a DNA-binding region, H-T-H motif; sequence QTRAALMMGINRGTLRKKLK.

Belongs to the transcriptional regulatory Fis family. In terms of assembly, homodimer.

In terms of biological role, activates ribosomal RNA transcription. Plays a direct role in upstream activation of rRNA promoters. In Enterobacter sp. (strain 638), this protein is DNA-binding protein Fis.